A 779-amino-acid polypeptide reads, in one-letter code: MELSLVRLWNTCFPSFFYISTVLFLLTGGGVYSHSEYLIGLGSYDITGPAADVNMMGYANMEQVASGIHFRLRARTFIVSEPQGKRVVFVNLDACMASQIVKLKVIERLKARYGDLYTEQNVGISGIHTHAGPGGYLQYVVYIVTSLGFVRQSFDALVDGIENSIIQAHENLRPGSIFLNNGELLDAGVNRSPSAYLNNPSKERSKHKYNVDKEMTLLKFVDDQWGPVGSFNWFATHGTSMSRTNSLISGDNKGAASRFMEDWYEQNTAERSYSEEFISDEIPRRVSSLIENHQDSHHELLELASYFESQPGKPVTRISSSARRVRSALRKADKPGFVSAFCQTNCGDVSPNVLGAFCLDTGLPCDFNHSTCGGKNEMCYGRGPGYPDEFESTRIIGERQFKMALELFNKASEQLQGKVDYRHVYVDFSQLNVTLPKKDGKSEVVKTCPAAMGFAFAAGTTDGPGAFDFTQGDDKGNPFWRLVRNVLKTPDKKQIDCHYPKPILLDTGEMTKPYDWAPSILSLQVLRIGQLFILSVPGEFTTMAGRRLRYAVKTQLKNSGNKDLSGEIHVVIAGLANGYSQYVTTFEEYQVQRYEGASTLYGPHTLSGYIQEFKKLSKSLVLDMPVQPGPQPPDLLDKQLSFLTPVMMDTTPSGDSFGDVISDVPKNLSLKRGNGQVTVVFRSACPRNDLLTEGTFTLVERLEQKDKTWTPVYDDDDLCLRFKWSRHKKLSSRSQATVEWRIPESASPGVYRITHFGAAKKLFGSVHHFTGSSSAFVVT.

Serine 350 (nucleophile) is an active-site residue. 3 N-linked (GlcNAc...) asparagine glycosylation sites follow: asparagine 368, asparagine 432, and asparagine 667.

It belongs to the neutral ceramidase family. In terms of tissue distribution, mostly expressed in stems, leaves, roots and siliques, and, to a lower extent, in flowers.

Its subcellular location is the secreted. The protein localises to the endoplasmic reticulum. It is found in the golgi apparatus. The catalysed reaction is an N-acylsphing-4-enine + H2O = sphing-4-enine + a fatty acid. Hydrolyzes the sphingolipid ceramide into sphingosine and free fatty acid. Regulates sphingolipid homeostasis. Promotes oxidative stress resistance. The protein is Neutral ceramidase 1 of Arabidopsis thaliana (Mouse-ear cress).